The chain runs to 400 residues: Acetate kinase (400 aa).

Asn-10 provides a ligand contact to Mg(2+). Residue Lys-17 participates in ATP binding. Arg-91 provides a ligand contact to substrate. Asp-150 functions as the Proton donor/acceptor in the catalytic mechanism. ATP contacts are provided by residues 210-214, 285-287, and 333-337; these read HLGNG, DCR, and GIGEN. Glu-387 provides a ligand contact to Mg(2+).

This sequence belongs to the acetokinase family. In terms of assembly, homodimer. It depends on Mg(2+) as a cofactor. Mn(2+) serves as cofactor.

It localises to the cytoplasm. It catalyses the reaction acetate + ATP = acetyl phosphate + ADP. The protein operates within metabolic intermediate biosynthesis; acetyl-CoA biosynthesis; acetyl-CoA from acetate: step 1/2. Functionally, catalyzes the formation of acetyl phosphate from acetate and ATP. Can also catalyze the reverse reaction. The chain is Acetate kinase from Erwinia tasmaniensis (strain DSM 17950 / CFBP 7177 / CIP 109463 / NCPPB 4357 / Et1/99).